A 354-amino-acid polypeptide reads, in one-letter code: DNA polymerase IV (354 aa).

One can recognise a UmuC domain in the interval 6–187; sequence IIHIDCDCFY…LPVTKLHGVG (182 aa). Mg(2+)-binding residues include D10 and D105. E106 is a catalytic residue.

Belongs to the DNA polymerase type-Y family. Monomer. The cofactor is Mg(2+).

The protein localises to the cytoplasm. It catalyses the reaction DNA(n) + a 2'-deoxyribonucleoside 5'-triphosphate = DNA(n+1) + diphosphate. Poorly processive, error-prone DNA polymerase involved in untargeted mutagenesis. Copies undamaged DNA at stalled replication forks, which arise in vivo from mismatched or misaligned primer ends. These misaligned primers can be extended by PolIV. Exhibits no 3'-5' exonuclease (proofreading) activity. May be involved in translesional synthesis, in conjunction with the beta clamp from PolIII. In Pseudomonas syringae pv. syringae (strain B728a), this protein is DNA polymerase IV.